The following is a 354-amino-acid chain: Ornithine transcarbamylase, mitochondrial (354 aa).

A mitochondrion-targeting transit peptide spans Met1–Gln32. At Lys70 the chain carries N6-acetyllysine; alternate. Lys70 carries the N6-succinyllysine; alternate modification. N6-succinyllysine is present on Lys80. Position 88 is an N6-acetyllysine; alternate (Lys88). Lys88 is subject to N6-succinyllysine; alternate. Ser90–Arg94 is a carbamoyl phosphate binding site. At Ser133 the chain carries Phosphoserine. Residue Arg141 coordinates carbamoyl phosphate. Arg141 contacts L-ornithine. Lys144 carries the N6-acetyllysine; alternate modification. An N6-succinyllysine; alternate modification is found at Lys144. His168 lines the carbamoyl phosphate pocket. Position 199 (Asn199) interacts with L-ornithine. Lys221, Lys231, and Lys238 each carry N6-acetyllysine; alternate. An N6-succinyllysine; alternate mark is found at Lys221, Lys231, and Lys238. An N6-acetyllysine modification is found at Lys243. Asp263 to Ser267 lines the L-ornithine pocket. 2 positions are modified to N6-succinyllysine: Lys274 and Lys289. An N6-acetyllysine; alternate modification is found at Lys292. Lys292 bears the N6-succinyllysine; alternate mark. His302–Pro305 provides a ligand contact to L-ornithine. Residue Cys303 is part of the active site. The residue at position 307 (Lys307) is an N6-acetyllysine; alternate. Lys307 is modified (N6-succinyllysine; alternate). Arg330 serves as a coordination point for carbamoyl phosphate. Residue Arg330 coordinates L-ornithine.

The protein belongs to the aspartate/ornithine carbamoyltransferase superfamily. OTCase family. As to quaternary structure, homotrimer. In terms of processing, acetylation at Lys-88 negatively regulates ornithine carbamoyltransferase activity in response to nutrient signals.

It localises to the mitochondrion matrix. The enzyme catalyses carbamoyl phosphate + L-ornithine = L-citrulline + phosphate + H(+). It functions in the pathway nitrogen metabolism; urea cycle; L-citrulline from L-ornithine and carbamoyl phosphate: step 1/1. Its activity is regulated as follows. Negatively regulated by lysine acetylation. Its function is as follows. Catalyzes the second step of the urea cycle, the condensation of carbamoyl phosphate with L-ornithine to form L-citrulline. The urea cycle ensures the detoxification of ammonia by converting it to urea for excretion. The polypeptide is Ornithine transcarbamylase, mitochondrial (Mus musculus (Mouse)).